Consider the following 317-residue polypeptide: NADPH-dependent D-xylose reductase (317 aa).

The Proton donor role is filled by Tyr-47. Residue His-109 coordinates substrate. Residues 164 to 165 (SN), 213 to 222 (SSFGPQSFVE), and 269 to 279 (KSNNPDRLLSN) contribute to the NADP(+) site.

The protein belongs to the aldo/keto reductase family.

It carries out the reaction xylitol + NAD(+) = D-xylose + NADH + H(+). It catalyses the reaction xylitol + NADP(+) = D-xylose + NADPH + H(+). The protein operates within carbohydrate metabolism; D-xylose degradation. In terms of biological role, reduces D-xylose into xylitol. Preferentially utilizes NADPH as a cosubstrate. This is NADPH-dependent D-xylose reductase (XYL1) from Meyerozyma guilliermondii (strain ATCC 6260 / CBS 566 / DSM 6381 / JCM 1539 / NBRC 10279 / NRRL Y-324) (Yeast).